The sequence spans 188 residues: Josephin-2 (188 aa).

One can recognise a Josephin domain in the interval 11-188 (PPTVYHERQR…EEKGSWLRTD (178 aa)). Residue Cys24 is the Nucleophile of the active site. The Proton acceptor role is filled by His125.

Its subcellular location is the cytoplasm. The protein resides in the cytosol. It carries out the reaction Thiol-dependent hydrolysis of ester, thioester, amide, peptide and isopeptide bonds formed by the C-terminal Gly of ubiquitin (a 76-residue protein attached to proteins as an intracellular targeting signal).. In terms of biological role, cleaves 'Lys-63'-linked poly-ubiquitin chains, and with lesser efficiency 'Lys-48'-linked poly-ubiquitin chains (in vitro). May act as a deubiquitinating enzyme. The protein is Josephin-2 (JOSD2) of Homo sapiens (Human).